Reading from the N-terminus, the 391-residue chain is Na(+)/H(+) antiporter NhaA 2 (391 aa).

A run of 11 helical transmembrane segments spans residues 25 to 45, 56 to 76, 98 to 118, 128 to 148, 157 to 177, 180 to 200, 208 to 228, 264 to 284, 297 to 317, 335 to 355, and 364 to 384; these read AGGIVLMAAALAALIVANSPL, VWLGLSVELWINDGLMAIFFL, ALPGFAALGGMLVPALIYIAI, GWAIPAATDIAFALGVLSLLG, VFLAALAILDDLGAVTIIAFF, SGLNLPMLAAAFVTLAVLVAL, LLPYLLLGALLWFFVLQSGVH, VAFAVVPIFGFANAGVSLSGI, VALGLFVGKQIGVFLAAVLAI, GVAILCGIGFTMSLFIGNLAF, and EVKVGVLIGSGLAAVAGIVLL.

This sequence belongs to the NhaA Na(+)/H(+) (TC 2.A.33) antiporter family.

Its subcellular location is the cell inner membrane. It catalyses the reaction Na(+)(in) + 2 H(+)(out) = Na(+)(out) + 2 H(+)(in). Its function is as follows. Na(+)/H(+) antiporter that extrudes sodium in exchange for external protons. The polypeptide is Na(+)/H(+) antiporter NhaA 2 (Pseudomonas syringae pv. tomato (strain ATCC BAA-871 / DC3000)).